Consider the following 91-residue polypeptide: Small ribosomal subunit protein uS19 (91 aa).

Belongs to the universal ribosomal protein uS19 family.

Its function is as follows. Protein S19 forms a complex with S13 that binds strongly to the 16S ribosomal RNA. This is Small ribosomal subunit protein uS19 from Cupriavidus necator (strain ATCC 17699 / DSM 428 / KCTC 22496 / NCIMB 10442 / H16 / Stanier 337) (Ralstonia eutropha).